Consider the following 316-residue polypeptide: Thymidylate synthase (316 aa).

DUMP is bound by residues Arg23 and 178–179 (RR). The Nucleophile role is filled by Cys198. DUMP contacts are provided by residues 218–221 (RSGD), Asn229, and 259–261 (HIY). Asp221 provides a ligand contact to (6R)-5,10-methylene-5,6,7,8-tetrahydrofolate. Ala315 contacts (6R)-5,10-methylene-5,6,7,8-tetrahydrofolate.

It belongs to the thymidylate synthase family. Bacterial-type ThyA subfamily. Homodimer.

It is found in the cytoplasm. The enzyme catalyses dUMP + (6R)-5,10-methylene-5,6,7,8-tetrahydrofolate = 7,8-dihydrofolate + dTMP. It functions in the pathway pyrimidine metabolism; dTTP biosynthesis. Its function is as follows. Catalyzes the reductive methylation of 2'-deoxyuridine-5'-monophosphate (dUMP) to 2'-deoxythymidine-5'-monophosphate (dTMP) while utilizing 5,10-methylenetetrahydrofolate (mTHF) as the methyl donor and reductant in the reaction, yielding dihydrofolate (DHF) as a by-product. This enzymatic reaction provides an intracellular de novo source of dTMP, an essential precursor for DNA biosynthesis. The polypeptide is Thymidylate synthase (Lactiplantibacillus plantarum (strain ATCC BAA-793 / NCIMB 8826 / WCFS1) (Lactobacillus plantarum)).